Consider the following 57-residue polypeptide: Andropin (57 aa).

The N-terminal stretch at 1–23 (MKYFVVLVVLALILAITVDPSDA) is a signal peptide.

This sequence belongs to the andropin family. As to expression, ejaculatory duct of adult males.

Its subcellular location is the secreted. Male-specific peptide with moderate activity against Gram-positive bacteria. The protein is Andropin (Anp) of Drosophila sechellia (Fruit fly).